We begin with the raw amino-acid sequence, 94 residues long: Protein EGG APPARATUS-1 (94 aa).

Residues 1–15 (MSSCPAIVNMKDDDG) are Cytoplasmic-facing. A helical; Signal-anchor for type II membrane protein transmembrane segment spans residues 16–36 (IGAMGAAVAFAAMGVFGIYFL). Residues 37–94 (WPVVGPTSAGMMMKAPGAAGWVICRAVFEANPQLYFTILRTAGAAAAAATFAACSIAS) are Extracellular-facing.

Post-translationally, possible proteolysis of the C-terminal region from the predicted transmembrane domain to permit secretion and transport of the mature protein to the cell walls of the nucellus, allowing the spreading from the egg cell apparatus to the micropylar opening of the ovule. In terms of tissue distribution, expressed only in the egg apparatus, consisting of the egg cell and two synergids. Not detected in the central cell, antipodals, and nucellar and integumental cells.

It is found in the membrane. Involved in short-range signaling required for pollen tube attraction by the female gametophyte. Required for female fertility. The polypeptide is Protein EGG APPARATUS-1 (Ea1) (Zea mays (Maize)).